Here is a 71-residue protein sequence, read N- to C-terminus: Cell division protein FtsB (71 aa).

The Cytoplasmic portion of the chain corresponds to Met-1 to Ile-3. A helical membrane pass occupies residues Leu-4–Phe-21. The Extracellular segment spans residues Gly-22–Thr-71.

The protein belongs to the FtsB family.

Its subcellular location is the cell membrane. Essential cell division protein. May link together the upstream cell division proteins, which are predominantly cytoplasmic, with the downstream cell division proteins, which are predominantly extracellular. This is Cell division protein FtsB from Buchnera aphidicola subsp. Acyrthosiphon pisum (strain APS) (Acyrthosiphon pisum symbiotic bacterium).